Here is a 421-residue protein sequence, read N- to C-terminus: Glutamyl-tRNA reductase (421 aa).

Residues 49-52 (TCNR), Ser-109, 114-116 (EAQ), and Gln-120 each bind substrate. Cys-50 serves as the catalytic Nucleophile. 189–194 (GAGEMC) is an NADP(+) binding site.

The protein belongs to the glutamyl-tRNA reductase family. As to quaternary structure, homodimer.

The enzyme catalyses (S)-4-amino-5-oxopentanoate + tRNA(Glu) + NADP(+) = L-glutamyl-tRNA(Glu) + NADPH + H(+). The protein operates within porphyrin-containing compound metabolism; protoporphyrin-IX biosynthesis; 5-aminolevulinate from L-glutamyl-tRNA(Glu): step 1/2. Its function is as follows. Catalyzes the NADPH-dependent reduction of glutamyl-tRNA(Glu) to glutamate 1-semialdehyde (GSA). The polypeptide is Glutamyl-tRNA reductase (Magnetococcus marinus (strain ATCC BAA-1437 / JCM 17883 / MC-1)).